The primary structure comprises 236 residues: Small ribosomal subunit protein bS21m (236 aa).

Positions 65-136 are disordered; sequence KPAAGAAAGG…SSKPSPMQTW (72 aa). Over residues 107–131 the composition is skewed to low complexity; the sequence is SNSSTSSSSSSSSSGGALYSSSKPS.

This sequence belongs to the bacterial ribosomal protein bS21 family. In terms of assembly, component of the mitochondrial small ribosomal subunit (mt-SSU). Mature N.crassa 74S mitochondrial ribosomes consist of a small (37S) and a large (54S) subunit. The 37S small subunit contains a 16S ribosomal RNA (16S mt-rRNA) and 32 different proteins. The 54S large subunit contains a 23S rRNA (23S mt-rRNA) and 42 different proteins.

Its subcellular location is the mitochondrion. In terms of biological role, component of the mitochondrial ribosome (mitoribosome), a dedicated translation machinery responsible for the synthesis of mitochondrial genome-encoded proteins, including at least some of the essential transmembrane subunits of the mitochondrial respiratory chain. The mitoribosomes are attached to the mitochondrial inner membrane and translation products are cotranslationally integrated into the membrane. In Neurospora crassa (strain ATCC 24698 / 74-OR23-1A / CBS 708.71 / DSM 1257 / FGSC 987), this protein is Small ribosomal subunit protein bS21m (mrp21).